Reading from the N-terminus, the 589-residue chain is Probable ATP-dependent RNA helicase DDX59 (589 aa).

2 disordered regions span residues 1–36 (MFVP…QLEG) and 48–98 (KEAV…SKTQ). The span at 12–27 (NSNDDLKSCEAKKSKP) shows a compositional bias: basic and acidic residues. Residue K26 forms a Glycyl lysine isopeptide (Lys-Gly) (interchain with G-Cter in SUMO2) linkage. Position 64 is a phosphoserine (S64). The span at 80–91 (GVKDSHPSEEPV) shows a compositional bias: basic and acidic residues. An HIT-type zinc finger spans residues 104 to 133 (GEPVCVVCGRYGEYICDKTDEDVCSLECKA). Phosphoserine is present on residues S156 and S160. Residues 203–231 (IDFEHCGFPETLNQNLKKSGYEVPTPIQM) carry the Q motif motif. One can recognise a Helicase ATP-binding domain in the interval 234 to 375 (IPVGLLGRDI…DQLLHNPVRI (142 aa)). Residue 247-254 (ADTGSGKT) coordinates ATP. The DEAD box motif lies at 323 to 326 (VKAD). Positions 399 to 549 (KKKKLFEILN…ILPPQLLNSP (151 aa)) constitute a Helicase C-terminal domain.

This sequence belongs to the DEAD box helicase family. DDX59 subfamily. Interacts (via HIT-type zinc finger) with the RUVBL1/RUVBL2 complex in the presence of ADP.

The protein resides in the cytoplasm. It is found in the nucleus. The catalysed reaction is ATP + H2O = ADP + phosphate + H(+). In Rattus norvegicus (Rat), this protein is Probable ATP-dependent RNA helicase DDX59 (Ddx59).